A 182-amino-acid polypeptide reads, in one-letter code: Crossover junction endodeoxyribonuclease RuvC (182 aa).

Catalysis depends on residues Asp-7, Glu-67, and Asp-139. Positions 7, 67, and 139 each coordinate Mg(2+).

This sequence belongs to the RuvC family. As to quaternary structure, homodimer which binds Holliday junction (HJ) DNA. The HJ becomes 2-fold symmetrical on binding to RuvC with unstacked arms; it has a different conformation from HJ DNA in complex with RuvA. In the full resolvosome a probable DNA-RuvA(4)-RuvB(12)-RuvC(2) complex forms which resolves the HJ. Mg(2+) is required as a cofactor.

It is found in the cytoplasm. It catalyses the reaction Endonucleolytic cleavage at a junction such as a reciprocal single-stranded crossover between two homologous DNA duplexes (Holliday junction).. Functionally, the RuvA-RuvB-RuvC complex processes Holliday junction (HJ) DNA during genetic recombination and DNA repair. Endonuclease that resolves HJ intermediates. Cleaves cruciform DNA by making single-stranded nicks across the HJ at symmetrical positions within the homologous arms, yielding a 5'-phosphate and a 3'-hydroxyl group; requires a central core of homology in the junction. The consensus cleavage sequence is 5'-(A/T)TT(C/G)-3'. Cleavage occurs on the 3'-side of the TT dinucleotide at the point of strand exchange. HJ branch migration catalyzed by RuvA-RuvB allows RuvC to scan DNA until it finds its consensus sequence, where it cleaves and resolves the cruciform DNA. The protein is Crossover junction endodeoxyribonuclease RuvC of Bordetella petrii (strain ATCC BAA-461 / DSM 12804 / CCUG 43448).